The primary structure comprises 86 residues: MAFKRKFTPKRKFCRFCADKNLPLDYKRPDILKDFVTERGKIIARRITGTCAKHQRRLTTEIKRSRQMALMHYTTVHSTDVKKKSI.

It belongs to the bacterial ribosomal protein bS18 family. Part of the 30S ribosomal subunit. Forms a tight heterodimer with protein bS6.

Binds as a heterodimer with protein bS6 to the central domain of the 16S rRNA, where it helps stabilize the platform of the 30S subunit. In Maridesulfovibrio salexigens (strain ATCC 14822 / DSM 2638 / NCIMB 8403 / VKM B-1763) (Desulfovibrio salexigens), this protein is Small ribosomal subunit protein bS18.